The primary structure comprises 198 residues: C4b-binding protein beta chain (198 aa).

A signal peptide spans 1–17; that stretch reads MFFWLMCYLVDVWLISA. One can recognise a Sushi 1; atypical; lacks a Cys domain in the interval 22-77; it reads HCPDPLLVTDEFSSLEPVNVNDTFMFKCNEHCIFKGSNWSQCRENHTRVTHSPVSK. Asn42, Asn59, and Asn66 each carry an N-linked (GlcNAc...) asparagine glycan. The region spanning 79 to 135 is the Sushi 2 domain; it reads RDCGPPETPTHGYFEGRDFKSGSTITYYCEARYRLVGTQHQQCIDGEWTSAPPICEL. 2 cysteine pairs are disulfide-bonded: Cys81-Cys121 and Cys107-Cys133.

In terms of assembly, disulfide-linked complex of alpha and beta chains.

The protein resides in the secreted. In terms of biological role, controls the classical pathway of complement activation. It binds as a cofactor to C3b/C4b inactivator (C3bINA), which then hydrolyzes the complement fragment C4b. It also accelerates the degradation of the C4bC2a complex (C3 convertase) by dissociating the complement fragment C2a. It also interacts with serum amyloid P component. The polypeptide is C4b-binding protein beta chain (C4BPB) (Bos taurus (Bovine)).